We begin with the raw amino-acid sequence, 301 residues long: Protoheme IX farnesyltransferase 1 (301 aa).

9 helical membrane-spanning segments follow: residues 29–49, 51–71, 101–121, 123–143, 150–170, 177–197, 223–243, 244–264, and 274–294; these read VVALMLLTVLVGMCLAVPHAV, VQPLLAGMLGIAMMAGSAAAL, ALIFAASLGSLGFIVLYSLVN, LTAWLTFASLIGYALVYTAYL, NIVIGGLAGAMPPLLGWTAVT, ALLLVIIIFTWTPPHFWALAI, CILLYTVLLAIACLLPVLVGM, CGPVYFVCSSLLSTGFIYKAW, and LAMQVFRFSIYHLMLLFMALL.

This sequence belongs to the UbiA prenyltransferase family. Protoheme IX farnesyltransferase subfamily.

It localises to the cell inner membrane. It carries out the reaction heme b + (2E,6E)-farnesyl diphosphate + H2O = Fe(II)-heme o + diphosphate. Its pathway is porphyrin-containing compound metabolism; heme O biosynthesis; heme O from protoheme: step 1/1. Functionally, converts heme B (protoheme IX) to heme O by substitution of the vinyl group on carbon 2 of heme B porphyrin ring with a hydroxyethyl farnesyl side group. In Shewanella baltica (strain OS195), this protein is Protoheme IX farnesyltransferase 1.